The chain runs to 293 residues: Lipoyl synthase (293 aa).

[4Fe-4S] cluster contacts are provided by cysteine 38, cysteine 43, cysteine 49, cysteine 64, cysteine 68, cysteine 71, and serine 277. The Radical SAM core domain maps to 50–266; it reads WSRGTATFLL…STIAKNAGIR (217 aa).

The protein belongs to the radical SAM superfamily. Lipoyl synthase family. Requires [4Fe-4S] cluster as cofactor.

Its subcellular location is the cytoplasm. It catalyses the reaction [[Fe-S] cluster scaffold protein carrying a second [4Fe-4S](2+) cluster] + N(6)-octanoyl-L-lysyl-[protein] + 2 oxidized [2Fe-2S]-[ferredoxin] + 2 S-adenosyl-L-methionine + 4 H(+) = [[Fe-S] cluster scaffold protein] + N(6)-[(R)-dihydrolipoyl]-L-lysyl-[protein] + 4 Fe(3+) + 2 hydrogen sulfide + 2 5'-deoxyadenosine + 2 L-methionine + 2 reduced [2Fe-2S]-[ferredoxin]. It functions in the pathway protein modification; protein lipoylation via endogenous pathway; protein N(6)-(lipoyl)lysine from octanoyl-[acyl-carrier-protein]: step 2/2. In terms of biological role, catalyzes the radical-mediated insertion of two sulfur atoms into the C-6 and C-8 positions of the octanoyl moiety bound to the lipoyl domains of lipoate-dependent enzymes, thereby converting the octanoylated domains into lipoylated derivatives. The protein is Lipoyl synthase of Chlorobium chlorochromatii (strain CaD3).